The sequence spans 440 residues: Serine/threonine-protein kinase STK11 (440 aa).

Positions 49–309 (YLMGDLLGEG…IQQIRQHNWF (261 aa)) constitute a Protein kinase domain. Residues 55 to 63 (LGEGSYGKV) and lysine 78 contribute to the ATP site. The Proton acceptor role is filled by aspartate 176. Phosphothreonine; by autocatalysis occurs at positions 336 and 365. The disordered stretch occupies residues 370–440 (VPGQVPEEEA…IRKLSTCKQQ (71 aa)). Positions 430–440 (KIRKLSTCKQQ) are enriched in basic residues. The residue at position 435 (serine 435) is a Phosphoserine; by PKA.

This sequence belongs to the protein kinase superfamily. CAMK Ser/Thr protein kinase family. LKB1 subfamily. In terms of assembly, catalytic component of a trimeric complex composed of STK11/LKB1, STRAD (STRADA or STRADB) and CAB39/MO25 (CAB39/MO25alpha or CAB39L/MO25beta). Mg(2+) serves as cofactor. Mn(2+) is required as a cofactor. As to expression, ubiquitously expressed in all tissues tested. High levels were observed in duodenum and skeletal muscle, lower levels in liver and pancreas.

It localises to the nucleus. Its subcellular location is the cytoplasm. The enzyme catalyses L-seryl-[protein] + ATP = O-phospho-L-seryl-[protein] + ADP + H(+). The catalysed reaction is L-threonyl-[protein] + ATP = O-phospho-L-threonyl-[protein] + ADP + H(+). In terms of biological role, tumor suppressor serine/threonine-protein kinase that controls the activity of AMP-activated protein kinase (AMPK) family members, thereby playing a role in various processes such as cell metabolism, cell polarity, apoptosis and DNA damage response. Acts by phosphorylating the T-loop of AMPK family proteins, leading to promote their activity. The protein is Serine/threonine-protein kinase STK11 of Gallus gallus (Chicken).